The following is a 252-amino-acid chain: Large ribosomal subunit protein uL4 (252 aa).

It belongs to the universal ribosomal protein uL4 family. Part of the 50S ribosomal subunit.

One of the primary rRNA binding proteins, this protein initially binds near the 5'-end of the 23S rRNA. It is important during the early stages of 50S assembly. It makes multiple contacts with different domains of the 23S rRNA in the assembled 50S subunit and ribosome. Functionally, forms part of the polypeptide exit tunnel. This Methanococcus aeolicus (strain ATCC BAA-1280 / DSM 17508 / OCM 812 / Nankai-3) protein is Large ribosomal subunit protein uL4.